The chain runs to 494 residues: UPF0371 protein SPCG_0344 (494 aa).

Belongs to the UPF0371 family.

In Streptococcus pneumoniae (strain CGSP14), this protein is UPF0371 protein SPCG_0344.